A 351-amino-acid polypeptide reads, in one-letter code: High-affinity nickel transport protein (351 aa).

Topologically, residues 1 to 19 (MFQLLAGVRMNSTGRPRAK) are cytoplasmic. Residues 20-40 (IILLYALLIAFNIGAWLCALA) form a helical membrane-spanning segment. Over 41–51 (AFRDHPVLLGT) the chain is Periplasmic. A helical transmembrane segment spans residues 52–72 (ALLAYGLGLRHAVDADHLAAI). Residues 73–94 (DNVTRKLMQDGRRPITAGLWFS) lie on the Cytoplasmic side of the membrane. The helical transmembrane segment at 95-115 (LGHSSVVVLASVLIAVMATTL) threads the bilayer. Residues 116–128 (QERLDAFHEVGSV) are Periplasmic-facing. Residues 129–149 (IGTLASALFLFAIAAINLVIL) traverse the membrane as a helical segment. Residues 150–199 (RSAYRAFRRVRRGGIYVEEDFDLLFGNRGFLARIFRPLFRFITRSWHMYP) are Cytoplasmic-facing. A helical transmembrane segment spans residues 200-220 (LGMLFALGFDTATEVALLGIS). Topologically, residues 221 to 243 (TMEASRGVPIWSILVFPALFTAG) are periplasmic. The helical transmembrane segment at 244–264 (MALIDTIDSILMCGAYAWAYA) threads the bilayer. Over 265–269 (KPVRK) the chain is Cytoplasmic. The chain crosses the membrane as a helical span at residues 270 to 290 (LYYNMTITFVSAIVALIVGGI). At 291 to 316 (ETLGLLADKFMLKGVFWNAVGALNEN) the chain is on the periplasmic side. Residues 317–337 (FCQLGFVIIGIFTVCWVVSIV) form a helical membrane-spanning segment. Over 338 to 351 (VYRLRRYDDSEVRA) the chain is Cytoplasmic.

The protein belongs to the NiCoT transporter (TC 2.A.52) family.

The protein resides in the cell inner membrane. Its function is as follows. High-affinity nickel transporter responsible for nickel uptake. Necessary for high levels of activity of hydrogenase and urease. Does not transport cobalt. The protein is High-affinity nickel transport protein (hoxN) of Cupriavidus necator (strain ATCC 17699 / DSM 428 / KCTC 22496 / NCIMB 10442 / H16 / Stanier 337) (Ralstonia eutropha).